Here is a 253-residue protein sequence, read N- to C-terminus: Cyclin-C1-2 (253 aa).

The protein belongs to the cyclin family. Cyclin C subfamily.

This Arabidopsis thaliana (Mouse-ear cress) protein is Cyclin-C1-2 (CYCC1-2).